Reading from the N-terminus, the 308-residue chain is Putative transcription elongation factor S-II (308 aa).

The TFIIS N-terminal domain maps to 5–84; it reads EETQSLCKQV…KDWKNVVDGK (80 aa). The segment at 82-126 is disordered; sequence DGKSKSQDDGGAPPAKKHRKESVEEAKPEKKKIEAPYKRPEPSSR. Residues 102-125 show a composition bias toward basic and acidic residues; that stretch reads ESVEEAKPEKKKIEAPYKRPEPSS. The 116-residue stretch at 148-263 folds into the TFIIS central domain; sequence TRLKSAQLLL…EHQMSVQQGT (116 aa). The TFIIS-type zinc finger occupies 266 to 306; sequence DMFKCGKCGKKNCTYTQLQTRSSDEPMTTFVFCLECGNRWK. Residues C270, C273, C298, and C301 each contribute to the Zn(2+) site.

It belongs to the TFS-II family.

The protein resides in the nucleus. Functionally, necessary for efficient RNA polymerase II transcription elongation past template-encoded arresting sites. The arresting sites in DNA have the property of trapping a certain fraction of elongating RNA polymerases that pass through, resulting in locked ternary complexes. Cleavage of the nascent transcript by S-II allows the resumption of elongation from the new 3'-terminus. The protein is Putative transcription elongation factor S-II of Caenorhabditis elegans.